We begin with the raw amino-acid sequence, 304 residues long: Probable WRKY transcription factor 13 (304 aa).

The interval 141–190 (QKNNHGSEIDVDDNDDEVGDGGGINDDDNGRHHHHDTPSRHDKHNTASLG) is disordered. Acidic residues predominate over residues 149–159 (IDVDDNDDEVG). The WRKY DNA-binding region spans 217-282 (SEVDVLDDGY…YEGRHLHSPS (66 aa)).

The protein belongs to the WRKY group II-c family.

Its subcellular location is the nucleus. Functionally, transcription factor. Interacts specifically with the W box (5'-(T)TGAC[CT]-3'), a frequently occurring elicitor-responsive cis-acting element. The sequence is that of Probable WRKY transcription factor 13 (WRKY13) from Arabidopsis thaliana (Mouse-ear cress).